The primary structure comprises 556 residues: MDKRHDSSRRIIAPHGSQLSCKSWLTEAPMRMLMNNLHPDVAERPEDLVVYGGIGRAARDWDCYDKIIEVLKRLEDDETLMVQSGKPVGVFRTHADAPRVLIANSNLVPHWANWEHFNELDKQGLAMYGQMTAGSWIYIGTQGIVQGTYETFVAVAKQHFGGVAAGKWILTGGLGGMGGAQTLAGTMAGFSVLACEVDETRIDFRLRTRYVDKKATSLDEALAMINDANASGKPVSVGLLANAADVFAELVKRGITPDVVTDQTSAHDPLNGYLPQGWTMAQAADMRKTDEAAVVKAAKASMAVQVQAMLELQAAGAATLDYGNNIRQMAFETGVKNAFDFPGFVPAYIRPLFCEGIGPFRWVALSGDPEDIYKTDAKVKELIPDNPHLHNWLDMARERIAFQGLPARICWVGLKDRARLAQAFNEMVKNGELSAPIVIGRDHLDSGSVASPNRETESMMDGSDAVSDWPLLNALLNTASGATWVSLHHGGGVGMGFSQHSGVVIVCDGTEAAAKRVGRVLWNDPATGVMRHADAGYEIAKNCAKEQGLDLPMLKD.

NAD(+)-binding positions include 52–53 (GG), Gln130, 176–178 (GMG), Glu196, Arg201, 242–243 (NA), 263–267 (QTSAH), 273–274 (YL), and Tyr322. Cys410 is a catalytic residue. Gly492 is an NAD(+) binding site.

It belongs to the urocanase family. NAD(+) serves as cofactor.

The protein localises to the cytoplasm. It catalyses the reaction 4-imidazolone-5-propanoate = trans-urocanate + H2O. It participates in amino-acid degradation; L-histidine degradation into L-glutamate; N-formimidoyl-L-glutamate from L-histidine: step 2/3. Its function is as follows. Catalyzes the conversion of urocanate to 4-imidazolone-5-propionate. The polypeptide is Urocanate hydratase (Shewanella sp. (strain ANA-3)).